Here is a 75-residue protein sequence, read N- to C-terminus: Toxin-like peptide AaF1CA7 (75 aa).

The N-terminal stretch at 1-22 (MMKLMLFSIIVILFSLIGSIHG) is a signal peptide. The LCN-type CS-alpha/beta domain occupies 25–75 (VPGNYPLDSSDDTYLCAPLGENPSCIQICRKHGVKYGYCYAFQCWCEYFGR). 3 cysteine pairs are disulfide-bonded: cysteine 40-cysteine 63, cysteine 49-cysteine 68, and cysteine 53-cysteine 70.

This sequence belongs to the long (3 C-C) scorpion toxin superfamily. In terms of tissue distribution, expressed by the venom gland.

It is found in the secreted. In terms of biological role, probable neurotoxin that inhibits ion channels. The sequence is that of Toxin-like peptide AaF1CA7 from Androctonus australis (Sahara scorpion).